The following is a 194-amino-acid chain: Outer-membrane lipoprotein LolB (194 aa).

Residues 1 to 18 form the signal peptide; it reads MTLFLRIFTFGCLLLLAG. C19 is lipidated: N-palmitoyl cysteine. Residue C19 is the site of S-diacylglycerol cysteine attachment.

It belongs to the LolB family. As to quaternary structure, monomer.

It is found in the cell outer membrane. Plays a critical role in the incorporation of lipoproteins in the outer membrane after they are released by the LolA protein. In Aeromonas salmonicida (strain A449), this protein is Outer-membrane lipoprotein LolB.